The primary structure comprises 382 residues: Cytoplasmic tRNA 2-thiolation protein 2 (382 aa).

Belongs to the CTU2/NCS2 family.

It localises to the cytoplasm. Its pathway is tRNA modification; 5-methoxycarbonylmethyl-2-thiouridine-tRNA biosynthesis. Plays a central role in 2-thiolation of mcm(5)S(2)U at tRNA wobble positions of tRNA(Lys), tRNA(Glu) and tRNA(Gln). May act by forming a heterodimer with NCS6 that ligates sulfur from thiocarboxylated URM1 onto the uridine of tRNAs at wobble position. Prior mcm(5) tRNA modification by the elongator complex is required for 2-thiolation. May also be involved in protein urmylation. This chain is Cytoplasmic tRNA 2-thiolation protein 2, found in Phaeosphaeria nodorum (strain SN15 / ATCC MYA-4574 / FGSC 10173) (Glume blotch fungus).